A 99-amino-acid chain; its full sequence is NADH dehydrogenase [ubiquinone] 1 alpha subcomplex subunit 2 (99 aa).

Alanine 2 is subject to N-acetylalanine. Cysteine 24 and cysteine 58 are joined by a disulfide. The residue at position 64 (lysine 64) is an N6-acetyllysine; alternate. Lysine 64 carries the N6-succinyllysine; alternate modification. Lysine 75 carries the post-translational modification N6-acetyllysine.

It belongs to the complex I NDUFA2 subunit family. As to quaternary structure, complex I is composed of 45 different subunits.

The protein localises to the mitochondrion inner membrane. Functionally, accessory subunit of the mitochondrial membrane respiratory chain NADH dehydrogenase (Complex I), that is believed not to be involved in catalysis. Complex I functions in the transfer of electrons from NADH to the respiratory chain. The immediate electron acceptor for the enzyme is believed to be ubiquinone. The sequence is that of NADH dehydrogenase [ubiquinone] 1 alpha subcomplex subunit 2 (NDUFA2) from Bos taurus (Bovine).